Consider the following 304-residue polypeptide: Glucose-6-phosphate isomerase (304 aa).

Glutamate 146 acts as the Proton donor in catalysis. Histidine 177 is a catalytic residue.

This sequence belongs to the GPI family.

The protein resides in the cytoplasm. It carries out the reaction alpha-D-glucose 6-phosphate = beta-D-fructose 6-phosphate. It functions in the pathway carbohydrate degradation; glycolysis; D-glyceraldehyde 3-phosphate and glycerone phosphate from D-glucose: step 2/4. The polypeptide is Glucose-6-phosphate isomerase (PGI) (Calanus finmarchicus (Calanus tonsus)).